The chain runs to 420 residues: Enolase (420 aa).

Position 162 (Gln-162) interacts with (2R)-2-phosphoglycerate. Glu-206 (proton donor) is an active-site residue. Mg(2+) is bound by residues Asp-241, Glu-282, and Asp-308. Residues Lys-333, Arg-362, Ser-363, and Lys-384 each contribute to the (2R)-2-phosphoglycerate site. Residue Lys-333 is the Proton acceptor of the active site.

Belongs to the enolase family. It depends on Mg(2+) as a cofactor.

Its subcellular location is the cytoplasm. The protein localises to the secreted. It localises to the cell surface. It catalyses the reaction (2R)-2-phosphoglycerate = phosphoenolpyruvate + H2O. It participates in carbohydrate degradation; glycolysis; pyruvate from D-glyceraldehyde 3-phosphate: step 4/5. Its function is as follows. Catalyzes the reversible conversion of 2-phosphoglycerate (2-PG) into phosphoenolpyruvate (PEP). It is essential for the degradation of carbohydrates via glycolysis. The chain is Enolase from Methanothrix thermoacetophila (strain DSM 6194 / JCM 14653 / NBRC 101360 / PT) (Methanosaeta thermophila).